A 600-amino-acid polypeptide reads, in one-letter code: Novobiocin biosynthesis protein H (600 aa).

A disordered region spans residues 505-526; it reads GGKTDRAGLPDPVKATQPAGLG. In terms of domain architecture, Carrier spans 526–600; the sequence is GPRTPAEKVL…QLAAIATLEE (75 aa). Residue Ser561 is modified to O-(pantetheine 4'-phosphoryl)serine.

Belongs to the ATP-dependent AMP-binding enzyme family.

It functions in the pathway antibiotic biosynthesis; novobiocin biosynthesis. In terms of biological role, together with NovI, involved in the formation of a beta-OH-Tyr intermediate in the novobiocin biosynthesis pathway, an aminocoumarin family antibiotic that targets bacterial DNA gyrases. The ATP-dependent AMP-binding region activates L-Tyr as L-tyrosyl-AMP and then transfers the L-tyrosyl group to the acyl carrier domain through thioester formation to form a tyrosyl-S intermediate that is covalently tethered to NovH (L-Tyr-S-NovH). In Streptomyces niveus (Streptomyces spheroides), this protein is Novobiocin biosynthesis protein H (novH).